Reading from the N-terminus, the 312-residue chain is Methionyl-tRNA formyltransferase (312 aa).

Residue 110–113 (SLLP) participates in (6S)-5,6,7,8-tetrahydrofolate binding.

Belongs to the Fmt family.

The catalysed reaction is L-methionyl-tRNA(fMet) + (6R)-10-formyltetrahydrofolate = N-formyl-L-methionyl-tRNA(fMet) + (6S)-5,6,7,8-tetrahydrofolate + H(+). Attaches a formyl group to the free amino group of methionyl-tRNA(fMet). The formyl group appears to play a dual role in the initiator identity of N-formylmethionyl-tRNA by promoting its recognition by IF2 and preventing the misappropriation of this tRNA by the elongation apparatus. The chain is Methionyl-tRNA formyltransferase from Koribacter versatilis (strain Ellin345).